Reading from the N-terminus, the 313-residue chain is Ribonuclease Z (313 aa).

The Zn(2+) site is built by H63, H65, D67, H68, H142, D212, and H270. The Proton acceptor role is filled by D67.

This sequence belongs to the RNase Z family. As to quaternary structure, homodimer. It depends on Zn(2+) as a cofactor.

It catalyses the reaction Endonucleolytic cleavage of RNA, removing extra 3' nucleotides from tRNA precursor, generating 3' termini of tRNAs. A 3'-hydroxy group is left at the tRNA terminus and a 5'-phosphoryl group is left at the trailer molecule.. Its function is as follows. Zinc phosphodiesterase, which displays some tRNA 3'-processing endonuclease activity. Probably involved in tRNA maturation, by removing a 3'-trailer from precursor tRNA. The sequence is that of Ribonuclease Z from Enterococcus faecalis (strain ATCC 700802 / V583).